Here is a 415-residue protein sequence, read N- to C-terminus: Phosphoglycerate kinase (415 aa).

Substrate contacts are provided by residues Asp28 to Asn30, Arg44, His67 to Arg70, Arg124, and Arg164. Residues Glu336 and Gly362 to Phe365 contribute to the ATP site.

It belongs to the phosphoglycerate kinase family.

It is found in the cytoplasm. It carries out the reaction (2R)-3-phosphoglycerate + ATP = (2R)-3-phospho-glyceroyl phosphate + ADP. The protein operates within carbohydrate degradation; glycolysis; pyruvate from D-glyceraldehyde 3-phosphate: step 2/5. This chain is Phosphoglycerate kinase (pgk), found in Aeropyrum pernix (strain ATCC 700893 / DSM 11879 / JCM 9820 / NBRC 100138 / K1).